The primary structure comprises 176 residues: ATP-dependent protease subunit HslV (176 aa).

The active site involves Thr2. Gly157, Cys160, and Thr163 together coordinate Na(+).

The protein belongs to the peptidase T1B family. HslV subfamily. In terms of assembly, a double ring-shaped homohexamer of HslV is capped on each side by a ring-shaped HslU homohexamer. The assembly of the HslU/HslV complex is dependent on binding of ATP.

The protein localises to the cytoplasm. It carries out the reaction ATP-dependent cleavage of peptide bonds with broad specificity.. Its activity is regulated as follows. Allosterically activated by HslU binding. Functionally, protease subunit of a proteasome-like degradation complex believed to be a general protein degrading machinery. The polypeptide is ATP-dependent protease subunit HslV (Proteus mirabilis (strain HI4320)).